Reading from the N-terminus, the 287-residue chain is MAVGKEIRIKIASVRNTQKITRAMEMVAASKMRRTQDRLQATRPYARKIARIIKHLAQANPEYKNPFMVERPVKRVGVVLVSSDRGLCGGLNSNLFRLLLRRMRAWGEAGVEVRLGVIGQKGASFFGGVGADVAAQVVRLGDTPHLEGIIGVLKVMLDAYGEGEIDELYVAHNEFVNTMTQKPKLECLAPIKAEELSDELKGHWDYLYEPDAKTVLDALITRYIESLVFQGLVENNACEQAARMVAMKSASDNAGKLIKELQLIYNKARQAAITQEIAEIVGGAAAV.

This sequence belongs to the ATPase gamma chain family. In terms of assembly, F-type ATPases have 2 components, CF(1) - the catalytic core - and CF(0) - the membrane proton channel. CF(1) has five subunits: alpha(3), beta(3), gamma(1), delta(1), epsilon(1). CF(0) has three main subunits: a, b and c.

It is found in the cell inner membrane. Produces ATP from ADP in the presence of a proton gradient across the membrane. The gamma chain is believed to be important in regulating ATPase activity and the flow of protons through the CF(0) complex. The protein is ATP synthase gamma chain of Methylococcus capsulatus (strain ATCC 33009 / NCIMB 11132 / Bath).